The chain runs to 229 residues: UPF0173 metal-dependent hydrolase SH1218 (229 aa).

Belongs to the UPF0173 family.

This Staphylococcus haemolyticus (strain JCSC1435) protein is UPF0173 metal-dependent hydrolase SH1218.